The primary structure comprises 654 residues: Heat shock 70 kDa protein 2 (654 aa).

Residues 612–646 (AGGEGGAPGAGFPGAGGPGGFPGAGAGGAHSGGDD) show a composition bias toward gly residues. The segment at 612-654 (AGGEGGAPGAGFPGAGGPGGFPGAGAGGAHSGGDDGPTVEEVD) is disordered.

This sequence belongs to the heat shock protein 70 family.

In Paracoccidioides lutzii (strain ATCC MYA-826 / Pb01) (Paracoccidioides brasiliensis), this protein is Heat shock 70 kDa protein 2 (HSP70-2).